A 332-amino-acid polypeptide reads, in one-letter code: Malate dehydrogenase, cytoplasmic (332 aa).

Residues 16–17, aspartate 43, and glycine 90 contribute to the NAD(+) site; that span reads QI. An oxaloacetate-binding site is contributed by arginine 99. The NAD(+) site is built by glutamine 113 and asparagine 132. Residues asparagine 132, arginine 163, histidine 188, and serine 243 each coordinate oxaloacetate. The Proton acceptor role is filled by histidine 188.

It belongs to the LDH/MDH superfamily. MDH type 2 family. Homodimer.

Its subcellular location is the cytoplasm. It carries out the reaction (S)-malate + NAD(+) = oxaloacetate + NADH + H(+). The polypeptide is Malate dehydrogenase, cytoplasmic (NR1) (Beta vulgaris (Sugar beet)).